The chain runs to 550 residues: C-type lectin domain family 4 member F (550 aa).

Residues Met-1–His-42 lie on the Cytoplasmic side of the membrane. A helical; Signal-anchor for type II membrane protein membrane pass occupies residues Val-43–Trp-69. At Arg-70–Ser-550 the chain is on the extracellular side. 6 N-linked (GlcNAc...) asparagine glycosylation sites follow: Asn-87, Asn-93, Asn-115, Asn-132, Asn-209, and Asn-255. The C-type lectin domain occupies Asn-438–Lys-538. 2 disulfide bridges follow: Cys-440/Cys-536 and Cys-516/Cys-528.

In terms of tissue distribution, kupffer cells.

The protein localises to the membrane. In terms of biological role, receptor with an affinity for galactose and fucose. Could be involved in endocytosis. In Rattus norvegicus (Rat), this protein is C-type lectin domain family 4 member F (Clec4f).